Here is a 145-residue protein sequence, read N- to C-terminus: D-aminoacyl-tRNA deacylase (145 aa).

Residues 137 to 138 (GP) carry the Gly-cisPro motif, important for rejection of L-amino acids motif.

It belongs to the DTD family. Homodimer.

Its subcellular location is the cytoplasm. It carries out the reaction glycyl-tRNA(Ala) + H2O = tRNA(Ala) + glycine + H(+). The catalysed reaction is a D-aminoacyl-tRNA + H2O = a tRNA + a D-alpha-amino acid + H(+). In terms of biological role, an aminoacyl-tRNA editing enzyme that deacylates mischarged D-aminoacyl-tRNAs. Also deacylates mischarged glycyl-tRNA(Ala), protecting cells against glycine mischarging by AlaRS. Acts via tRNA-based rather than protein-based catalysis; rejects L-amino acids rather than detecting D-amino acids in the active site. By recycling D-aminoacyl-tRNA to D-amino acids and free tRNA molecules, this enzyme counteracts the toxicity associated with the formation of D-aminoacyl-tRNA entities in vivo and helps enforce protein L-homochirality. This Stutzerimonas stutzeri (strain A1501) (Pseudomonas stutzeri) protein is D-aminoacyl-tRNA deacylase.